The primary structure comprises 789 residues: Spermatogenesis-associated protein 20 (789 aa).

The segment covering 1–19 has biased composition (basic residues); the sequence is MSHHSPPPPKHKGEHKGHG. A disordered region spans residues 1 to 65; it reads MSHHSPPPPK…CPPPAPQKTA (65 aa). Phosphoserine is present on residues Ser-5 and Ser-652.

As to expression, testis-specific and age-dependent (at protein level). Highly expressed. Expressed in round spermatids located in the inner half-layer of the seminiferous epithelium as well as in early elongated spermatids having cytoplasmic protrusions into the tubular lumen.

Its subcellular location is the secreted. Functionally, may play a role in fertility regulation. In Rattus norvegicus (Rat), this protein is Spermatogenesis-associated protein 20 (Spata20).